The primary structure comprises 147 residues: Deoxyuridine 5'-triphosphate nucleotidohydrolase (147 aa).

Residues 67-69 (RSG), N80, and 84-86 (TID) contribute to the substrate site.

This sequence belongs to the dUTPase family. Mg(2+) is required as a cofactor.

It catalyses the reaction dUTP + H2O = dUMP + diphosphate + H(+). The protein operates within pyrimidine metabolism; dUMP biosynthesis; dUMP from dCTP (dUTP route): step 2/2. This enzyme is involved in nucleotide metabolism: it produces dUMP, the immediate precursor of thymidine nucleotides and it decreases the intracellular concentration of dUTP so that uracil cannot be incorporated into DNA. In Syntrophotalea carbinolica (strain DSM 2380 / NBRC 103641 / GraBd1) (Pelobacter carbinolicus), this protein is Deoxyuridine 5'-triphosphate nucleotidohydrolase.